We begin with the raw amino-acid sequence, 146 residues long: Antirestriction protein KlcA (146 aa).

Belongs to the antirestriction protein family.

Its function is as follows. Could be involved in overcoming restriction barriers during establishment after conjugative transfer. In Escherichia coli, this protein is Antirestriction protein KlcA (klcA).